The primary structure comprises 290 residues: DegV domain-containing protein MG450 (290 aa).

A DegV domain is found at 3 to 289 (IAFLVDSVSN…INSYAFLIQT (287 aa)). 2 residues coordinate hexadecanoate: Thr-65 and Ser-97.

Its function is as follows. May bind long-chain fatty acids, such as palmitate, and may play a role in lipid transport or fatty acid metabolism. The polypeptide is DegV domain-containing protein MG450 (Mycoplasma genitalium (strain ATCC 33530 / DSM 19775 / NCTC 10195 / G37) (Mycoplasmoides genitalium)).